A 131-amino-acid chain; its full sequence is Small ribosomal subunit protein uS8 (131 aa).

This sequence belongs to the universal ribosomal protein uS8 family. In terms of assembly, part of the 30S ribosomal subunit. Contacts proteins S5 and S12.

Its function is as follows. One of the primary rRNA binding proteins, it binds directly to 16S rRNA central domain where it helps coordinate assembly of the platform of the 30S subunit. The chain is Small ribosomal subunit protein uS8 from Zymomonas mobilis subsp. mobilis (strain ATCC 31821 / ZM4 / CP4).